Reading from the N-terminus, the 453-residue chain is Glutamyl-tRNA(Gln) amidotransferase subunit A (453 aa).

Catalysis depends on charge relay system residues lysine 56 and serine 131. Serine 155 serves as the catalytic Acyl-ester intermediate.

It belongs to the amidase family. GatA subfamily. In terms of assembly, heterotrimer of A, B and C subunits.

The catalysed reaction is L-glutamyl-tRNA(Gln) + L-glutamine + ATP + H2O = L-glutaminyl-tRNA(Gln) + L-glutamate + ADP + phosphate + H(+). Allows the formation of correctly charged Gln-tRNA(Gln) through the transamidation of misacylated Glu-tRNA(Gln) in organisms which lack glutaminyl-tRNA synthetase. The reaction takes place in the presence of glutamine and ATP through an activated gamma-phospho-Glu-tRNA(Gln). The sequence is that of Glutamyl-tRNA(Gln) amidotransferase subunit A from Campylobacter fetus subsp. fetus (strain 82-40).